Here is a 339-residue protein sequence, read N- to C-terminus: Foldase protein PrsA (339 aa).

The first 26 residues, 1 to 26 (MKHLKNNTKKFTALLFALLFSMSIAG), serve as a signal peptide directing secretion. Cys27 carries N-palmitoyl cysteine lipidation. Cys27 is lipidated: S-diacylglycerol cysteine. The PpiC domain occupies 197–287 (KPTFHAQHVL…FGYHVIKLID (91 aa)).

It belongs to the PrsA family.

The protein localises to the cell membrane. It carries out the reaction [protein]-peptidylproline (omega=180) = [protein]-peptidylproline (omega=0). Its function is as follows. Plays a major role in protein secretion by helping the post-translocational extracellular folding of several secreted proteins. In Clostridium tetani (strain Massachusetts / E88), this protein is Foldase protein PrsA.